The following is a 479-amino-acid chain: MGNMPKDFLWGGALAAHQFEGGWNQGGKGPSVVDVMTAGAHGVPRKITDTIEENEFYPNHEAIDFYHRYKEDIALFAEMGLKCLRTSIGWSRIFPKGDEAEPNEAGLQFYDDVFDELLKHGIEPVITLSHFEMPLHLAREYGGFRNRKVVDFFVNFAEACFTRYKDKVKYWMTFNEINNQMDVNNPLFLWTNSGVVVGENENAKEVMYQTAHHELVASALAVAKGKDINPEFQIGAMVSHVPIYPFSSNPEDVMLAEEEMRQRYFFPDVQVRGYYPSYALKEFEREGYNITFEDGDDEILRNGTVDYLGFSYYMSTTVKSDVKNDNTGDIVNGGLPNGVENPYITSSDWGWAIDPTGLRYTLNRFYDRYQIPLFIVENGFGAVDTLEEDGKVHDPERIQYLKSHIEALKKAVTYDGVDLIGYTPWGIIDIVSFTTGEMKKRYGMIYVDRDNEGNGSMKRYKKDSFEWYKNVIQTNGEEL.

Glutamate 176 acts as the Proton donor in catalysis. Glutamate 377 serves as the catalytic Nucleophile.

It belongs to the glycosyl hydrolase 1 family.

The enzyme catalyses 6-phospho-beta-D-glucosyl-(1-&gt;4)-D-glucose + H2O = D-glucose 6-phosphate + D-glucose. Functionally, catalyzes the hydrolysis of aryl-phospho-beta-D-glucosides such as 4-methylumbelliferyl-phospho-beta-D-glucopyranoside (MUG-P), phosphoarbutin and phosphosalicin. Plays a major role in the utilization of arbutin or salicin as the sole carbon source. BglA and BglH are the major proteins contributing to hydrolysis of MUG-P by extracts of late-exponential-phase or stationary-phase B.subtilis cells. The chain is Aryl-phospho-beta-D-glucosidase BglA (bglA) from Bacillus subtilis (strain 168).